Consider the following 289-residue polypeptide: Pantothenate synthetase (289 aa).

Residue 30–37 (MGNLHEGH) participates in ATP binding. The Proton donor role is filled by His37. Gln61 is a binding site for (R)-pantoate. Gln61 provides a ligand contact to beta-alanine. Position 149–152 (149–152 (GEKD)) interacts with ATP. Gln155 contributes to the (R)-pantoate binding site. 186–189 (MSSR) serves as a coordination point for ATP.

The protein belongs to the pantothenate synthetase family. As to quaternary structure, homodimer.

It is found in the cytoplasm. The enzyme catalyses (R)-pantoate + beta-alanine + ATP = (R)-pantothenate + AMP + diphosphate + H(+). It functions in the pathway cofactor biosynthesis; (R)-pantothenate biosynthesis; (R)-pantothenate from (R)-pantoate and beta-alanine: step 1/1. Functionally, catalyzes the condensation of pantoate with beta-alanine in an ATP-dependent reaction via a pantoyl-adenylate intermediate. This Psychromonas ingrahamii (strain DSM 17664 / CCUG 51855 / 37) protein is Pantothenate synthetase.